We begin with the raw amino-acid sequence, 191 residues long: 7-methyl-GTP pyrophosphatase (191 aa).

Asp-70 serves as the catalytic Proton acceptor.

Belongs to the Maf family. YceF subfamily. A divalent metal cation is required as a cofactor.

The protein resides in the cytoplasm. It catalyses the reaction N(7)-methyl-GTP + H2O = N(7)-methyl-GMP + diphosphate + H(+). Functionally, nucleoside triphosphate pyrophosphatase that hydrolyzes 7-methyl-GTP (m(7)GTP). May have a dual role in cell division arrest and in preventing the incorporation of modified nucleotides into cellular nucleic acids. In Xanthomonas oryzae pv. oryzae (strain KACC10331 / KXO85), this protein is 7-methyl-GTP pyrophosphatase.